Consider the following 67-residue polypeptide: Putative antitoxin PF1308 (67 aa).

The protein belongs to the UPF0165 family.

Possibly the antitoxin component of a type II toxin-antitoxin (TA) system. This is Putative antitoxin PF1308 from Pyrococcus furiosus (strain ATCC 43587 / DSM 3638 / JCM 8422 / Vc1).